Consider the following 137-residue polypeptide: Large ribosomal subunit protein uL16 (137 aa).

The span at 1 to 17 (MLSPKRVKFRKRQRGRL) shows a compositional bias: basic residues. The disordered stretch occupies residues 1–24 (MLSPKRVKFRKRQRGRLKGTDERG).

This sequence belongs to the universal ribosomal protein uL16 family. In terms of assembly, part of the 50S ribosomal subunit.

Functionally, binds 23S rRNA and is also seen to make contacts with the A and possibly P site tRNAs. The chain is Large ribosomal subunit protein uL16 from Leptospira borgpetersenii serovar Hardjo-bovis (strain JB197).